We begin with the raw amino-acid sequence, 129 residues long: Copper chaperone GriE (129 aa).

Residues 1–37 (MPMNRREMVMATTGAALAAAAAVPLLSGGEGEGAAEA) constitute a signal peptide (tat-type signal). A disordered region spans residues 32–51 (EGAAEAAAAPAKATGRGREH). A compositionally biased stretch (low complexity) spans 34-45 (AAEAAAAPAKAT).

It belongs to the melC1 family. Post-translationally, predicted to be exported by the Tat system. The position of the signal peptide cleavage has not been experimentally proven.

Its function is as follows. Involved in the transfer of Cu(2+) ions to the apo form of o-aminophenol oxidase GriF in the grixazone biosynthetic pathway. The chain is Copper chaperone GriE (griE) from Streptomyces griseus subsp. griseus (strain JCM 4626 / CBS 651.72 / NBRC 13350 / KCC S-0626 / ISP 5235).